The following is a 209-amino-acid chain: Ribosomal RNA large subunit methyltransferase E (209 aa).

Glycine 63, tryptophan 65, aspartate 83, aspartate 99, and aspartate 124 together coordinate S-adenosyl-L-methionine. The active-site Proton acceptor is the lysine 164.

The protein belongs to the class I-like SAM-binding methyltransferase superfamily. RNA methyltransferase RlmE family.

Its subcellular location is the cytoplasm. It catalyses the reaction uridine(2552) in 23S rRNA + S-adenosyl-L-methionine = 2'-O-methyluridine(2552) in 23S rRNA + S-adenosyl-L-homocysteine + H(+). Its function is as follows. Specifically methylates the uridine in position 2552 of 23S rRNA at the 2'-O position of the ribose in the fully assembled 50S ribosomal subunit. The protein is Ribosomal RNA large subunit methyltransferase E of Cronobacter sakazakii (strain ATCC BAA-894) (Enterobacter sakazakii).